A 110-amino-acid chain; its full sequence is METLAQHRQARCSAQKIRLIADLIRGKKVPKALNILNFNNKKAAILVKKVLESALANAEHNDGLDVDQLRIKNIFVDEGSTMKRMMPRAKGRADRILKRTSHITVIVSDR.

It belongs to the universal ribosomal protein uL22 family. In terms of assembly, part of the 50S ribosomal subunit.

In terms of biological role, this protein binds specifically to 23S rRNA; its binding is stimulated by other ribosomal proteins, e.g. L4, L17, and L20. It is important during the early stages of 50S assembly. It makes multiple contacts with different domains of the 23S rRNA in the assembled 50S subunit and ribosome. The globular domain of the protein is located near the polypeptide exit tunnel on the outside of the subunit, while an extended beta-hairpin is found that lines the wall of the exit tunnel in the center of the 70S ribosome. The protein is Large ribosomal subunit protein uL22 of Buchnera aphidicola subsp. Schizaphis graminum (strain Sg).